Here is a 196-residue protein sequence, read N- to C-terminus: Nodulation protein A (196 aa).

This sequence belongs to the NodA family.

The protein resides in the cytoplasm. In terms of biological role, N-acyltransferase required for nodulation. Acts in the production of a small, heat-stable compound (Nod) that stimulates mitosis in various plant protoplasts. The protein is Nodulation protein A of Sinorhizobium terangae.